Consider the following 200-residue polypeptide: High mobility group protein B3 (200 aa).

Lys-3 carries the N6-acetyllysine modification. DNA-binding regions (HMG box) lie at residues 9 to 79 (PKGK…KDYG) and 93 to 161 (PKRP…ADYK). Cys-23 carries the post-translational modification Cysteine sulfonic acid (-SO3H); alternate. Residues Cys-23 and Cys-45 are joined by a disulfide bond. An N6-acetyllysine mark is found at Lys-30 and Lys-43. Cys-45 carries the post-translational modification Cysteine sulfonic acid (-SO3H); alternate. Positions 71 to 97 (YDREMKDYGPAKGGKKKKDPNAPKRPP) are disordered. Ser-98 carries the phosphoserine modification. Position 104 is a cysteine sulfonic acid (-SO3H) (Cys-104). Lys-112 and Lys-139 each carry N6-acetyllysine. Residues 163-200 (KGKFDGAKGAAKVARKKVEEEDEEDEEEEEEEEEEEDE) form a disordered region. Residues 182–200 (EEDEEDEEEEEEEEEEEDE) show a composition bias toward acidic residues.

It belongs to the HMGB family. In terms of processing, reduction/oxidation of cysteine residues Cys-23, Cys-45 and Cys-104 and a possible intramolecular disulfide bond involving Cys-23 and Cys-45 give rise to different redox forms with specific functional activities in various cellular compartments: 1- fully reduced HMGB3 (HMGB3C23hC45hC104h), 2- disulfide HMGB3 (HMGB3C23-C45C104h) and 3- sulfonyl HMGB3 (HMGB3C23soC45soC104so).

Its subcellular location is the nucleus. The protein localises to the chromosome. It is found in the cytoplasm. Its function is as follows. Multifunctional protein with various roles in different cellular compartments. May act in a redox sensitive manner. Associates with chromatin and binds DNA with a preference for non-canonical DNA structures such as single-stranded DNA. Can bend DNA and enhance DNA flexibility by looping thus providing a mechanism to promote activities on various gene promoters. Proposed to be involved in the innate immune response to nucleic acids by acting as a cytoplasmic promiscuous immunogenic DNA/RNA sensor. Negatively regulates B-cell and myeloid cell differentiation. In hematopoietic stem cells may regulate the balance between self-renewal and differentiation. Involved in negative regulation of canonical Wnt signaling. The protein is High mobility group protein B3 (HMGB3) of Bos taurus (Bovine).